A 247-amino-acid chain; its full sequence is MSGALKRKRSDEVAWSRRRPVKKPVRRAPPPRAGPSVRRGLPSLQIQTLVAAGDTMITVPSGGICSLIGTYARGSGEGERHTNETLTYKVALDYHFVATAAACKYSSIGIGVCWLVYDAQPTGTAPTVQDIFPHPATLSAFPYTWKVGREVCHRFVVKRRWCFTMETNGRIGSDTPPSNVAWPPCKKDIYFHKFCTGLGVKTEWKNVTDGKDGAIKKGGFYIVIAPGNVEFTCHGQCRLYFKSVGNQ.

The Bipartite nuclear localization signal motif lies at 1–28 (MSGALKRKRSDEVAWSRRRPVKKPVRRA). A disordered region spans residues 1–39 (MSGALKRKRSDEVAWSRRRPVKKPVRRAPPPRAGPSVRR). A compositionally biased stretch (basic residues) spans 16–26 (SRRRPVKKPVR).

It belongs to the geminiviridae capsid protein family. In terms of assembly, homomultimer. Interacts with the movement protein. Binds to single-stranded and double-stranded viral DNA.

It is found in the virion. The protein resides in the host nucleus. In terms of biological role, encapsidates the viral genome into characteristic twinned ('geminate') particles. Binds the genomic viral ssDNA and shuttles it into and out of the cell nucleus. Plays a role in protection of the genome from degradation, virus acquisition and transmission by insect vectors, infectivity, and systemic movement. The CP of monopartite geminiviruses is absolutely essential for virus movement. This chain is Capsid protein, found in Megathyrsus maximus (PanSV).